The following is a 228-amino-acid chain: MPRLILIRHGQSQWNLENRFTGWWDVDVTEKGAAEAFAAGKLLKDKGVLPTLAFTSLQTRAIKTLHLALEAAGRLWVQEDKDWRLNERHYGGLTGLDKAETAAKHGDEQVKVWRRSFDVPPPPLEAGSEFDLASDPRYDGIAVPATESLKDTIARVLPCWEEKIAPALRAGETVIVSAHGNSLRALVKHLSGISDEDITGLEIPTGQPIVYELDNDLAQVERYYLSER.

Substrate-binding positions include 8–15, 21–22, arginine 60, 87–90, lysine 98, 114–115, and 180–181; these read RHGQSQWN, TG, ERHY, RR, and GN. Histidine 9 acts as the Tele-phosphohistidine intermediate in catalysis. Glutamate 87 functions as the Proton donor/acceptor in the catalytic mechanism.

The protein belongs to the phosphoglycerate mutase family. BPG-dependent PGAM subfamily. As to quaternary structure, homodimer.

It catalyses the reaction (2R)-2-phosphoglycerate = (2R)-3-phosphoglycerate. It participates in carbohydrate degradation; glycolysis; pyruvate from D-glyceraldehyde 3-phosphate: step 3/5. Catalyzes the interconversion of 2-phosphoglycerate and 3-phosphoglycerate. In Novosphingobium aromaticivorans (strain ATCC 700278 / DSM 12444 / CCUG 56034 / CIP 105152 / NBRC 16084 / F199), this protein is 2,3-bisphosphoglycerate-dependent phosphoglycerate mutase.